We begin with the raw amino-acid sequence, 235 residues long: Small ribosomal subunit protein uS2c (235 aa).

It belongs to the universal ribosomal protein uS2 family.

The protein localises to the plastid. The sequence is that of Small ribosomal subunit protein uS2c (rps2) from Euglena longa (Euglenophycean alga).